Here is a 224-residue protein sequence, read N- to C-terminus: MAPPAAPGRDRVGREDEDGWETRGDRKARKPLVEKKRRARINESLQELRLLLAGAEVQAKLENAEVLELTVRRVQGVLRGRAREREQLQAEASERFAAGYIQCMHEVHTFVSTCQAIDATVAAELLNHLLESMPLREGSSFQDLLGDALAGPPRAPGRSGWPAGGAPGSPIPSPPGPGDDLCSDLEEAPEAELSQAPAEGPDLVPAALGSLTTAQIARSVWRPW.

The disordered stretch occupies residues 1-31; sequence MAPPAAPGRDRVGREDEDGWETRGDRKARKP. Basic and acidic residues predominate over residues 8-25; the sequence is GRDRVGREDEDGWETRGD. In terms of domain architecture, bHLH spans 25–77; that stretch reads DRKARKPLVEKKRRARINESLQELRLLLAGAEVQAKLENAEVLELTVRRVQGV. The region spanning 96–129 is the Orange domain; the sequence is FAAGYIQCMHEVHTFVSTCQAIDATVAAELLNHL. Low complexity predominate over residues 147–161; it reads DALAGPPRAPGRSGW. The disordered stretch occupies residues 147–205; the sequence is DALAGPPRAPGRSGWPAGGAPGSPIPSPPGPGDDLCSDLEEAPEAELSQAPAEGPDLVP. The segment covering 181–190 has biased composition (acidic residues); it reads LCSDLEEAPE. The WRPW motif motif lies at 221-224; sequence WRPW.

Transcription repression requires formation of a complex with a corepressor protein of the Groucho/TLE family. Interacts with HES1.

It is found in the nucleus. Its function is as follows. Does not bind DNA itself but suppresses both HES1-mediated N box-dependent transcriptional repression and binding of HES1 to E box sequences. Also suppresses HES1-mediated inhibition of the heterodimer formed by ASCL1/MASH1 and TCF3/E47, allowing ASCL1 and TCF3 to up-regulate transcription in its presence. Promotes cell differentiation. The polypeptide is Transcription cofactor HES-6 (Homo sapiens (Human)).